The primary structure comprises 85 residues: MKVAIVFLSLLVLAFASESIEENREEFPVEESARCGDINAPCQSDCDCCGYSVTCDCYWSSSCKCRESLFPLGMALRKAFCQNKI.

The N-terminal stretch at 1 to 16 (MKVAIVFLSLLVLAFA) is a signal peptide. Positions 17–34 (SESIEENREEFPVEESAR) are excised as a propeptide. Intrachain disulfides connect Cys35–Cys49, Cys42–Cys55, Cys46–Cys81, Cys48–Cys65, and Cys57–Cys63. Residues 82-85 (QNKI) constitute a propeptide that is removed on maturation.

The protein belongs to the neurotoxin 03 (Tx2) family. 05 subfamily. Expressed by the venom gland.

The protein localises to the secreted. Its function is as follows. Insecticidal neurotoxin that reversibly inhibits the N-methyl-D-aspartate (NMDA)-subtype of ionotropic glutamate receptor (GRIN) and inhibits inactivation of insect sodium channels (Nav). In vivo, is highly toxic to insects. This Phoneutria nigriventer (Brazilian armed spider) protein is U1-ctenitoxin-Pn1a.